The following is a 211-amino-acid chain: Claudin-7 (211 aa).

At 1–7 (MANSGLQ) the chain is on the cytoplasmic side. The helical transmembrane segment at 8–28 (LLGFSMAMLGWVGLIASTAIP) threads the bilayer. Residues 29–81 (QWQMSSYAGDNIITAQAMYKGLWMECVTQSTGMMSCKMYDSVLALPGALQATR) are Extracellular-facing. A helical transmembrane segment spans residues 82–102 (ALMVVSLVLGFLAMFVATMGM). Residues 103-119 (KCTRCGGDDKAKKARIA) are Cytoplasmic-facing. Residues 120–140 (MTGGIVFIVAGLAALVACSWI) form a helical membrane-spanning segment. Over 141–160 (GHQIVTDFYNPLTPMNVKYE) the chain is Extracellular. Residues 161-181 (FGPAIFIGWAGSALVLLGGAL) traverse the membrane as a helical segment. The Cytoplasmic portion of the chain corresponds to 182–211 (LSCSCPGSESKAAYRAPRSYPKSNSSKEYV). The interactions with TJP1, TJP2 and TJP3 stretch occupies residues 210 to 211 (YV).

Belongs to the claudin family. In terms of assembly, directly interacts with TJP1/ZO-1, TJP2/ZO-2 and TJP3/ZO-3. The phosphorylated form interacts with EPCAM. Post-translationally, phosphorylated. Expressed predominantly in lung and kidney.

The protein resides in the cell membrane. It localises to the basolateral cell membrane. The protein localises to the cell junction. Its subcellular location is the tight junction. Functionally, plays a major role in tight junction-specific obliteration of the intercellular space, through calcium-independent cell-adhesion activity. This Mus musculus (Mouse) protein is Claudin-7 (Cldn7).